We begin with the raw amino-acid sequence, 104 residues long: UPF0147 protein MK1586 (104 aa).

This sequence belongs to the UPF0147 family.

The protein is UPF0147 protein MK1586 of Methanopyrus kandleri (strain AV19 / DSM 6324 / JCM 9639 / NBRC 100938).